A 66-amino-acid chain; its full sequence is Protein KleD (66 aa).

The H-T-H motif DNA-binding region spans 33 to 52 (VAVRSGNEWQQVTKWVEPAR).

This is Protein KleD (kleD) from Escherichia coli.